The sequence spans 96 residues: Small ribosomal subunit protein bS6 (96 aa).

Belongs to the bacterial ribosomal protein bS6 family.

Binds together with bS18 to 16S ribosomal RNA. The sequence is that of Small ribosomal subunit protein bS6 from Streptococcus pneumoniae serotype 19F (strain G54).